Here is a 342-residue protein sequence, read N- to C-terminus: Cell cycle control protein 50C (342 aa).

The Cytoplasmic portion of the chain corresponds to 1–33 (MEMMPQYDLSRLPENTALKQQTLPTQQLNLSAS). Residues 34-54 (VVLSIFFITGGFCLSIGIILL) form a helical membrane-spanning segment. At 55-306 (LSAKSTKKIE…STLTWIGGGG (252 aa)) the chain is on the extracellular side. N-linked (GlcNAc...) asparagine glycans are attached at residues Asn66, Asn80, Asn89, and Asn205. Residues 307–327 (LFLGLTYTVTGALTLLASFAI) traverse the membrane as a helical segment. Over 328-342 (LTIHLMLKRSKLNFL) the chain is Cytoplasmic.

This sequence belongs to the CDC50/LEM3 family. Specifically expressed in testis.

It is found in the membrane. The chain is Cell cycle control protein 50C (Tmem30c) from Mus musculus (Mouse).